The following is a 476-amino-acid chain: Growth/differentiation factor 10 (476 aa).

Positions 1–29 (MAPGLARISLRSQLLPLVPLLLLLRGAGC) are cleaved as a signal peptide. Residues 30 to 366 (GHRVPSWSSL…EKTMQKARRR (337 aa)) constitute a propeptide that is removed on maturation. Residues N114, N152, and N277 are each glycosylated (N-linked (GlcNAc...) asparagine). Disordered stretches follow at residues 268-305 (GDFEPGAAPNSSADPRVRRAAQVSKPLQDNELPGLDER) and 330-358 (PRTGRKDRKKKDQDTFTPSSSQVLDFDEK). 3 disulfide bridges follow: C374-C441, C403-C473, and C407-C475. An N-linked (GlcNAc...) asparagine glycan is attached at N467.

This sequence belongs to the TGF-beta family. In terms of assembly, homodimer or heterodimer. Can form a non-covalent complex of the mature region and the pro-region. As to expression, costa, costicartilage, femur, calvaria, trachea, aorta and brain. Predominantly in the cerebellum.

The protein resides in the secreted. Growth factor involved in osteogenesis and adipogenesis. Plays an inhibitory role in the process of osteoblast differentiation via SMAD2/3 pathway. Plays an inhibitory role in the process of adipogenesis. In Rattus norvegicus (Rat), this protein is Growth/differentiation factor 10.